The primary structure comprises 261 residues: Proline-rich protein HaeIII subfamily 1 (261 aa).

An N-terminal signal peptide occupies residues 1–15 (MLVVLFTVALLALSS). A disordered region spans residues 15-261 (SAQGPREENQ…PPQGRPQGPR (247 aa)). 2 stretches are compositionally biased toward pro residues: residues 32–44 (QRPP…PRPP) and 51–237 (GPPP…PPTG). The segment covering 238–261 (GPQQTPPLAGNTQGPPQGRPQGPR) has biased composition (low complexity).

It localises to the secreted. The polypeptide is Proline-rich protein HaeIII subfamily 1 (Prh1) (Mus musculus (Mouse)).